A 141-amino-acid polypeptide reads, in one-letter code: Large ribosomal subunit protein uL16c (141 aa).

Belongs to the universal ribosomal protein uL16 family. As to quaternary structure, part of the 50S ribosomal subunit.

The protein resides in the plastid. The protein localises to the chloroplast. The protein is Large ribosomal subunit protein uL16c of Zygnema circumcarinatum (Green alga).